Reading from the N-terminus, the 596-residue chain is Beta-fructofuranosidase, insoluble isoenzyme 7 (596 aa).

The N-terminal stretch at 1 to 24 (MARLGLAVCAASFHLFLLLASTSS) is a signal peptide. Substrate contacts are provided by residues 51–54 (WQND), Q70, and W78. The active site involves D54. N-linked (GlcNAc...) asparagine glycosylation occurs at N82. Substrate-binding positions include 115–116 (WS), 179–180 (RD), and E234. An N-linked (GlcNAc...) asparagine glycan is attached at N330. A disulfide bridge links C432 with C478. N552 carries an N-linked (GlcNAc...) asparagine glycan.

The protein belongs to the glycosyl hydrolase 32 family. Expressed in roots, leaves and flowers. Weakly expressed in seeds.

The protein localises to the secreted. Its subcellular location is the extracellular space. The protein resides in the apoplast. It is found in the cell wall. The catalysed reaction is Hydrolysis of terminal non-reducing beta-D-fructofuranoside residues in beta-D-fructofuranosides.. May play a role in sucrose partitioning during seed development. This Oryza sativa subsp. japonica (Rice) protein is Beta-fructofuranosidase, insoluble isoenzyme 7 (CIN7).